The following is a 162-amino-acid chain: Probable E3 ubiquitin-protein ligase XERICO (162 aa).

A helical membrane pass occupies residues 12 to 28 (GMLCVILVNTALSISIV). An RING-type; atypical zinc finger spans residues 103–145 (CSVCLSKFQGDSEINKLKCGHLFHKTCLEKWIDYWNITCPLCR).

As to quaternary structure, interacts with UBC8 and TULP9. Ubiquitous. Higher expression in actively growing tissues.

Its subcellular location is the membrane. The enzyme catalyses S-ubiquitinyl-[E2 ubiquitin-conjugating enzyme]-L-cysteine + [acceptor protein]-L-lysine = [E2 ubiquitin-conjugating enzyme]-L-cysteine + N(6)-ubiquitinyl-[acceptor protein]-L-lysine.. It participates in protein modification; protein ubiquitination. In terms of biological role, function on abscisic acid homeostasis at post-translational level, probably through ubiquitin/proteasome-dependent substrate-specific degradation. The chain is Probable E3 ubiquitin-protein ligase XERICO (XERICO) from Arabidopsis thaliana (Mouse-ear cress).